The primary structure comprises 390 residues: Putative glutamate--cysteine ligase 2 (390 aa).

It belongs to the glutamate--cysteine ligase type 2 family. YbdK subfamily.

The enzyme catalyses L-cysteine + L-glutamate + ATP = gamma-L-glutamyl-L-cysteine + ADP + phosphate + H(+). Functionally, ATP-dependent carboxylate-amine ligase which exhibits weak glutamate--cysteine ligase activity. This Chloroflexus aggregans (strain MD-66 / DSM 9485) protein is Putative glutamate--cysteine ligase 2.